A 170-amino-acid polypeptide reads, in one-letter code: Protein AIG2 A (170 aa).

15-20 (YGSFQE) is a substrate binding site. E83 functions as the Proton acceptor in the catalytic mechanism. Residues 147–162 (KNPNGRSREEFEKFVQ) show a composition bias toward basic and acidic residues. A disordered region spans residues 147-170 (KNPNGRSREEFEKFVQDDSSPASA).

This sequence belongs to the gamma-glutamylcyclotransferase family. As to expression, ubiquitous.

In terms of biological role, putative gamma-glutamylcyclotransferase. The chain is Protein AIG2 A from Arabidopsis thaliana (Mouse-ear cress).